Here is a 301-residue protein sequence, read N- to C-terminus: Acetylglutamate kinase (301 aa).

Residues 68-69, R90, and N195 each bind substrate; that span reads GG.

The protein belongs to the acetylglutamate kinase family. ArgB subfamily.

It localises to the cytoplasm. It catalyses the reaction N-acetyl-L-glutamate + ATP = N-acetyl-L-glutamyl 5-phosphate + ADP. It functions in the pathway amino-acid biosynthesis; L-arginine biosynthesis; N(2)-acetyl-L-ornithine from L-glutamate: step 2/4. Its function is as follows. Catalyzes the ATP-dependent phosphorylation of N-acetyl-L-glutamate. In Pseudomonas entomophila (strain L48), this protein is Acetylglutamate kinase.